A 360-amino-acid polypeptide reads, in one-letter code: Histidinol-phosphate aminotransferase (360 aa).

Lysine 223 carries the post-translational modification N6-(pyridoxal phosphate)lysine.

This sequence belongs to the class-II pyridoxal-phosphate-dependent aminotransferase family. Histidinol-phosphate aminotransferase subfamily. Homodimer. Pyridoxal 5'-phosphate serves as cofactor.

It carries out the reaction L-histidinol phosphate + 2-oxoglutarate = 3-(imidazol-4-yl)-2-oxopropyl phosphate + L-glutamate. Its pathway is amino-acid biosynthesis; L-histidine biosynthesis; L-histidine from 5-phospho-alpha-D-ribose 1-diphosphate: step 7/9. This Bacillus velezensis (strain DSM 23117 / BGSC 10A6 / LMG 26770 / FZB42) (Bacillus amyloliquefaciens subsp. plantarum) protein is Histidinol-phosphate aminotransferase.